Reading from the N-terminus, the 1975-residue chain is MKLPLGLLMICLGLTLAKGETNLPPVFTQTLNNIILYENVTVGTVVFRLEAYDPEGSPVTYGAIGADHFSVDPVSGNITLIKPLDREEKDTLKFLVSIRDRVDPEGESERDNVVEVPITFIILDLNDNPPEFQNTPYEADVNEDAAVGTTIFDKITVKDRDIVGESLDLKCLPQQQSPEACRKFRLHIIKRDATILEAAVVLNDTLNYNQRMVYHFQIEATDGPHKTQTTFEARVKDVQDKPPVFQGSLSTVIDEDSPINTLVLTVHARDGDTGEPRKIVYDLRTNPNDYFLLDAQTGELRTAKPLDREALEDSTGIISLVIRARELVNGVPSDDPLTSATAKATVTIRDVNDSPPVFNHKEYSVSLLENTLPGTPLALDMSVSDADVGINSKFALRLDDVSGVFDVEPKLVTGYSQVNIRVANGTLDYENPNQRKFIVLVVAEETDTNPRLSSTATITVSVLDANDNKPVFEQESYSASVSEAALPGQYIATITARDVDSGSYGDSGIRYSLSGTGAELFHVNEQTGVISLANCHDNGESNRRERRDLNEDEHVEEDDGEGHLEMLSMEAATREIGTEPTVQYTLITQAPEEQASSVPLPAPVPHAAPSGVPAATANDDKAPQTCLDYESETTYFLSYKATDDNGRGSASVVSLRISVTDANDSPPVCESPLYRASVDEGAVVFDSPLIVKARDADTMSRISYRIRGSEQVESIFDIDRETGQIIIRPNATLDVTNLNSDQLIFAVEANDGLFTAHCGVNITVRDVNNHVPNFEQQSYSAVVEENSEIGTSVERVHATDLDTGKNAELRYRIQQGSFDDFGIVETTGEVFVSRKLDFDRRNTYQLQIQASDQGTPSLTGTATLTINVQNSNDKDPYFVPATQHAEVRADAPPGQLVYTLIALDPDVANHNALEFAGTDDITAIDKEGKELPHYDQFKEYFKISRNGKVSVNKQLDRNLFAVMRINVLVTDSTAPNVQQGRGLLIIQIIDVNKNPPRFNAPWSVEQPQIKLQMVEEQPVGTVLTTLQANDEDSSIGEFNISDNDYFAINQTSGMIYTIARLDYEVVKEVKFQVTVSDTGVPALTATADVVVDIINLNDNDPKFSQSDYYFNVTENSPRGTVAGKVEAHDGDVGVFGEITYTLIGENNKYFSIDAYTGNVMVANSSILDREQIKELTLSVVAQDKAPAAVQKSATATIHINILDVNDNAPVFTRDVYNSTVAENAAYQPPAALLQVQAIDQDEGLYGDVRYIITAGNEMGLFKLDAQSGIVYPAQSLSGKHGAYELTISARDTQGSGTMESTTKAIITVLRVNRHKPEFVIPALSNATIEIPGDIVQPDYLLLTVRAMDNDTEENGKVSYHLQVNNRNEQQTGEFKIDEVTGELRAKTQLNRKNRANYDIILVARDAGNPPFESLRLLSVSIVDANENRPEFPDASNPYKVSINENSGRDVKIGHIQAASRSKHNRDIFYYMLLGNEDGAFYVDKLTGDIYTNKSLDREETDVYTLYILASIKADLHISEEERASFSIKTLNRDNTVAKVAITVLDVNDNPPVFEKPIYYAGVNANAKMGAAITLVNATDADQGKNAKIEFMIVASNLYKFGATKSTGSIVPSPFAISQDGRISANTIMAEYNQDRFELEIVARELEQPQSSASTKVNIWVFDGTQLVRVILSRPPEEVYQEQEEIIAELRNATQHRIIVDEIRFHLDSIGRIRMDWCDLYFHAVDPQTQQIAPVDEILKDIDRNYDYLKDYYAGFAIENVVPAYIAIVQDEFDLAVAGLVALVIVLFVGVISFIVLCCCLKHWNLSVPVETRRKEALIKKQIIEDLNTTENPLWIEQKLKLYEEQELTMQVFSEPDHISNSEAPGHLDHRSSLEQVHHVGQTVDNTYATIQPRNNQNRLTGGGGAGGGSMRSGGGASAGGVGGAGLLLARVDPHMNEFADYATLRNNRAPSLYEFTGSTFQAPIRDGDDAVAELI.

Positions 1 to 17 are cleaved as a signal peptide; the sequence is MKLPLGLLMICLGLTLA. At 18-1775 the chain is on the extracellular side; it reads KGETNLPPVF…AIVQDEFDLA (1758 aa). Cadherin domains follow at residues 28 to 132, 133 to 245, 246 to 358, 359 to 472, 473 to 669, 670 to 774, 775 to 878, 879 to 998, 999 to 1103, 1104 to 1211, 1212 to 1318, 1319 to 1431, 1432 to 1553, and 1554 to 1677; these read TQTL…PPEF, QNTP…PPVF, QGSL…PPVF, NHKE…KPVF, EQES…PPVC, ESPL…VPNF, EQQS…DPYF, VPAT…PPRF, NAPW…DPKF, SQSD…APVF, TRDV…KPEF, VIPA…RPEF, PDAS…PPVF, and EKPI…PPEE. Asn39, Asn77, and Asn203 each carry an N-linked (GlcNAc...) asparagine glycan. Asn424 carries an N-linked (GlcNAc...) asparagine glycan. The disordered stretch occupies residues 535–560; that stretch reads CHDNGESNRRERRDLNEDEHVEEDDG. Residues 537-549 are compositionally biased toward basic and acidic residues; it reads DNGESNRRERRDL. The segment covering 550–560 has biased composition (acidic residues); the sequence is NEDEHVEEDDG. Asn730 and Asn761 each carry an N-linked (GlcNAc...) asparagine glycan. N-linked (GlcNAc...) asparagine glycosylation is found at Asn1039, Asn1049, Asn1111, Asn1163, Asn1217, Asn1325, Asn1349, Asn1492, Asn1576, and Asn1691. The chain crosses the membrane as a helical span at residues 1776 to 1796; it reads VAGLVALVIVLFVGVISFIVL. At 1797–1975 the chain is on the cytoplasmic side; that stretch reads CCCLKHWNLS…DGDDAVAELI (179 aa). Residues 1887-1899 are compositionally biased toward polar residues; sequence YATIQPRNNQNRL. Positions 1887–1916 are disordered; it reads YATIQPRNNQNRLTGGGGAGGGSMRSGGGA. A compositionally biased stretch (gly residues) spans 1900–1916; that stretch reads TGGGGAGGGSMRSGGGA.

Its subcellular location is the cell membrane. In terms of biological role, cadherins are calcium-dependent cell adhesion proteins. They preferentially interact with themselves in a homophilic manner in connecting cells. In Drosophila melanogaster (Fruit fly), this protein is Cadherin-87A (Cad87A).